A 242-amino-acid chain; its full sequence is Sec-independent protein translocase protein TatCd (242 aa).

Helical transmembrane passes span 19-39 (IIVT…FVQD), 60-80 (ILWV…IPVA), and 107-127 (LFAL…PIVL). Positions 128–149 (SFLTHLSSGHFETMFTADRYFR) are interaction with TatAd. A helical membrane pass occupies residues 150 to 170 (FMVNLSLPFGFLFEMPLVVMF). The interaction with TatAd stretch occupies residues 171–187 (LTRLGILNPYRLAKARK). A run of 2 helical transmembrane segments spans residues 188–208 (LSYF…FISD) and 209–229 (FLVM…SAFV).

Belongs to the TatC family. Forms a complex with TatAd. Two types of complexes exist: one composed of TatAd and TatCd, and another composed only of TatAd.

The protein localises to the cell membrane. Functionally, part of the twin-arginine translocation (Tat) system that transports large folded proteins containing a characteristic twin-arginine motif in their signal peptide across membranes. Required for PhoD secretion. TatCd promotes membrane localization of TatAd via domain specific interactions. TatCd is required for stabile production of TatAd as well as for its maintenance. The polypeptide is Sec-independent protein translocase protein TatCd (Bacillus subtilis (strain 168)).